Reading from the N-terminus, the 416-residue chain is Subtilisin-like protease 12 (416 aa).

Positions 1–19 (MSILKMMLIYFAIFWVVNA) are cleaved as a signal peptide. The propeptide occupies 20-116 (AQLLDIDSQG…VEPNKEMQVA (97 aa)). In terms of domain architecture, Inhibitor I9 spans 35-115 (YIVVMKDRVS…FVEPNKEMQV (81 aa)). N-linked (GlcNAc...) asparagine glycans are attached at residues asparagine 123, asparagine 136, and asparagine 150. The region spanning 125–416 (TWGLSRISHK…NKLLYNGSGA (292 aa)) is the Peptidase S8 domain. Catalysis depends on charge relay system residues aspartate 157 and histidine 188. Residues asparagine 249, asparagine 305, asparagine 334, and asparagine 353 are each glycosylated (N-linked (GlcNAc...) asparagine). Serine 362 (charge relay system) is an active-site residue. Asparagine 404 and asparagine 412 each carry an N-linked (GlcNAc...) asparagine glycan.

It belongs to the peptidase S8 family.

It localises to the secreted. Functionally, secreted subtilisin-like serine protease with keratinolytic activity that contributes to pathogenicity. This chain is Subtilisin-like protease 12 (SUB12), found in Arthroderma benhamiae (strain ATCC MYA-4681 / CBS 112371) (Trichophyton mentagrophytes).